The chain runs to 350 residues: MFS transporter OpS2 (350 aa).

Transmembrane regions (helical) follow at residues 3 to 23, 34 to 54, 65 to 85, 141 to 161, 174 to 194, 227 to 247, 253 to 273, and 312 to 332; these read FLAG…VADL, GYFF…GGIL, WGAV…LPET, FMTC…NLAI, AIIL…ASVV, MCEN…VFGW, IFWF…SLIF, and PLLG…ICWA.

It belongs to the major facilitator superfamily.

Its subcellular location is the cell membrane. Its function is as follows. MFS transporter; part of the gene cluster that mediates the biosynthesis of the bibenzoquinone oosporein, a metabolite required for fungal virulence that acts by evading host immunity to facilitate fungal multiplication in insects. The function of this putative MFS transporter remains unclear since its deletion leads to increased oosporein production. This chain is MFS transporter OpS2, found in Beauveria bassiana (strain ARSEF 2860) (White muscardine disease fungus).